Reading from the N-terminus, the 1890-residue chain is Proteasome-associated protein ECM29 homolog (1890 aa).

HEAT repeat units follow at residues 6–29, 30–67, 130–167, 226–263, 294–330, 334–354, 355–395, 459–496, 498–523, 524–561, 565–602, 685–722, 776–813, 843–882, 938–975, 980–1018, 1118–1155, and 1159–1196; these read NAEI…EKLE, AAVG…RLSS, DKLF…ICAN, FSDL…MLDF, RVRQ…TNTN, KVLA…ELVS, KVSK…SFPQ, GQQH…EYYA, ARYL…LYGT, SKKD…EQRR, PSFQ…SLEV, AKQL…FGLS, PQFV…AVEI, STKL…GDGE, DDFD…HCSQ, LAKK…ISDS, PYLG…DSKE, and RYYW…RPNG. A Phosphoserine modification is found at Ser-1213. HEAT repeat units lie at residues 1271–1309, 1313–1350, 1378–1415, 1416–1457, 1497–1534, 1541–1578, 1583–1620, and 1623–1660; these read AVAS…SSGS, PHLA…AQEA, SVLE…IRLG, KEMT…LAKE, DYMD…DVSP, LNLN…RLSS, PDRL…GLDR, and QICS…QLEA. The interval 1680–1702 is disordered; that stretch reads RKESDDEDEPNTSQELSADERNK. Ser-1683 bears the Phosphoserine mark. Thr-1691 is subject to Phosphothreonine. A Phosphoserine modification is found at Ser-1692. HEAT repeat units lie at residues 1751 to 1788 and 1826 to 1863; these read PVQV…EKKI and KEAL…NLEK.

In terms of assembly, associated with the proteasome.

Its subcellular location is the cytoplasm. The sequence is that of Proteasome-associated protein ECM29 homolog from Drosophila melanogaster (Fruit fly).